Consider the following 454-residue polypeptide: MSTTDTIVAQATPPGRGGVGILRVSGRAAATVAQAVLGKLPKPRYADYLPFKDVDGSTLDQGIALYFPGPNSFTGEDVLELQGHGGPVILDLLLKRILALPGLRIARPGEFSERAFLNDKLDLAQAEAIADLIDASSEQAARSAVNSLQGAFSVRIHQLVEALTHLRIYVEAAIDFPDEEIDFLSDGKIEGQLNGVMADLEQVRTEARQGSLLREGMKVVIAGRPNAGKSSLLNALAGREAAIVTDIAGTTRDVLREHIHIDGMPLHIIDTAGLREASDEVERIGIERAWHEIEQADRVLFMVDGTTTDATEPAAIWPEFMARLPATLPITVVRNKADITGETLGLTEVNGHSLIRLSARTGEGIDLLRNHLKQSMGFTSNTEGGFLARRRHLQALETAAQHLAQGHEQLVSAYAGELLAEELRLAQQSLSEITGEFSSDDLLGRIFSSFCIGK.

3 residues coordinate (6S)-5-formyl-5,6,7,8-tetrahydrofolate: Arg-23, Glu-80, and Lys-120. In terms of domain architecture, TrmE-type G spans 216–377; the sequence is GMKVVIAGRP…LRNHLKQSMG (162 aa). Asn-226 serves as a coordination point for K(+). Residues 226–231, 245–251, 270–273, 335–338, and 358–360 each bind GTP; these read NAGKSS, TDIAGTT, DTAG, NKAD, and SAR. Position 230 (Ser-230) interacts with Mg(2+). K(+) is bound by residues Thr-245, Ile-247, and Thr-250. Residue Thr-251 coordinates Mg(2+). Residue Lys-454 coordinates (6S)-5-formyl-5,6,7,8-tetrahydrofolate.

This sequence belongs to the TRAFAC class TrmE-Era-EngA-EngB-Septin-like GTPase superfamily. TrmE GTPase family. Homodimer. Heterotetramer of two MnmE and two MnmG subunits. K(+) is required as a cofactor.

The protein resides in the cytoplasm. Exhibits a very high intrinsic GTPase hydrolysis rate. Involved in the addition of a carboxymethylaminomethyl (cmnm) group at the wobble position (U34) of certain tRNAs, forming tRNA-cmnm(5)s(2)U34. The sequence is that of tRNA modification GTPase MnmE from Yersinia enterocolitica serotype O:8 / biotype 1B (strain NCTC 13174 / 8081).